The chain runs to 922 residues: Cell surface glycoprotein 2 (922 aa).

Positions 1–23 (MTGNSDKVRSLFLTALMVFSVFA) are cleaved as a signal peptide. Asparagine 37, asparagine 56, asparagine 110, asparagine 220, asparagine 251, asparagine 262, and asparagine 292 each carry an N-linked (GlcNAc...) asparagine glycan. N-linked (GalNAc...) asparagine glycosylation occurs at asparagine 307. N-linked (GlcNAc...) asparagine glycosylation is found at asparagine 319, asparagine 344, asparagine 396, asparagine 437, asparagine 490, asparagine 523, asparagine 557, asparagine 574, asparagine 587, asparagine 616, asparagine 700, asparagine 717, asparagine 809, asparagine 838, and asparagine 847. Positions 816–899 (PHQDTNGNEE…GTETTEAEGP (84 aa)) are disordered. Positions 835 to 850 (YTQNGSAVTDSANVTV) are enriched in polar residues. Over residues 853–887 (EEPEDTPEDTPEDTPEDTPEDTPEDTPADTPEDTP) the composition is skewed to acidic residues. Low complexity predominate over residues 888–899 (DTGTETTEAEGP). Residues 898 to 918 (GPGFTAAIALIALVAAALLAV) traverse the membrane as a helical segment. The short motif at 899-901 (PGF) is the PGF sorting signal element.

The protein belongs to the halobacterial S-layer protein family. N-glycosylated on Asn-307; this N-linked glycan is a branched trisaccharide containing 2-amino-6-sulfo-2,6-dideoxy-glucose (sulfoquinovosamine). In terms of processing, O-glycosylated on Thr residues within the DTPE repeats in the C-terminal region; glycans consist of Glc-Gal disaccharides. Post-translationally, cleaved by the archaeosortase ArtA at the C-terminus, with removal of a short hydrophobic segment. Lipidation.

It is found in the secreted. It localises to the cell wall. The protein localises to the S-layer. The protein resides in the cell membrane. Its function is as follows. S-layer protein. The S-layer is a paracrystalline mono-layered assembly of proteins which coat the surface of the cell. In H.hispanica, the S-layer contains two different glycoproteins, Slg1 and Slg2, which share highly similar amino acid sequences. This is Cell surface glycoprotein 2 from Haloarcula hispanica (strain ATCC 33960 / DSM 4426 / JCM 8911 / NBRC 102182 / NCIMB 2187 / VKM B-1755).